Here is a 131-residue protein sequence, read N- to C-terminus: Peptide methionine sulfoxide reductase MsrB (131 aa).

Positions 8-130 (LDEWRSMLDP…NSVCIDLRPR (123 aa)) constitute a MsrB domain. Zn(2+)-binding residues include C47, C50, C96, and C99. Catalysis depends on C119, which acts as the Nucleophile.

The protein belongs to the MsrB Met sulfoxide reductase family. Zn(2+) is required as a cofactor.

It carries out the reaction L-methionyl-[protein] + [thioredoxin]-disulfide + H2O = L-methionyl-(R)-S-oxide-[protein] + [thioredoxin]-dithiol. The protein is Peptide methionine sulfoxide reductase MsrB of Pseudomonas putida (strain GB-1).